Consider the following 209-residue polypeptide: Molybdenum cofactor guanylyltransferase (209 aa).

GTP contacts are provided by residues 13-15 (LAG), Lys26, Asn54, Asp74, and Asp104. Residue Asp104 participates in Mg(2+) binding.

The protein belongs to the MobA family. In terms of assembly, monomer. Mg(2+) is required as a cofactor.

It localises to the cytoplasm. It carries out the reaction Mo-molybdopterin + GTP + H(+) = Mo-molybdopterin guanine dinucleotide + diphosphate. Transfers a GMP moiety from GTP to Mo-molybdopterin (Mo-MPT) cofactor (Moco or molybdenum cofactor) to form Mo-molybdopterin guanine dinucleotide (Mo-MGD) cofactor. This is Molybdenum cofactor guanylyltransferase from Acinetobacter baumannii (strain ACICU).